Reading from the N-terminus, the 293-residue chain is Inhibitory synaptic factor 1 (293 aa).

Residues 1-26 (MNIRGAPDLGQPSDDPSSGGERERIR) form a disordered region. Residues 30–63 (KMVIGQLEGILRELKEVAKELREVVSQIDKLTSD) adopt a coiled-coil conformation. Disordered stretches follow at residues 120 to 186 (TPSD…RERV) and 200 to 293 (DDEE…RGKN). Polar residues predominate over residues 171 to 180 (VKSQLPQRTP). Positions 200–215 (DDEEGDGEQEVEEEEV) are enriched in acidic residues. Polar residues-rich tracts occupy residues 243 to 256 (SPLT…TLAP) and 264 to 286 (RNSS…TATR).

Belongs to the INSYN1 family. As to quaternary structure, interacts with GPHN.

The protein resides in the postsynaptic density. In terms of biological role, component of the protein machinery at the inhibitory synapses, probably acting as a scaffold. Inhibitory synapses dampen neuronal activity through postsynaptic hyperpolarization. This synaptic inhibition is fundamental for the functioning of the central nervous system, shaping and orchestrating the flow of information through neuronal networks to generate a precise neural code. This is Inhibitory synaptic factor 1 from Homo sapiens (Human).